We begin with the raw amino-acid sequence, 170 residues long: 3-dehydroquinate dehydratase (170 aa).

Tyr22 serves as the catalytic Proton acceptor. Residues Asn76, His82, and Asp89 each coordinate substrate. His102 acts as the Proton donor in catalysis. Substrate-binding positions include 103–104 and Arg113; that span reads LT.

This sequence belongs to the type-II 3-dehydroquinase family. In terms of assembly, homododecamer.

The enzyme catalyses 3-dehydroquinate = 3-dehydroshikimate + H2O. It functions in the pathway metabolic intermediate biosynthesis; chorismate biosynthesis; chorismate from D-erythrose 4-phosphate and phosphoenolpyruvate: step 3/7. Catalyzes a trans-dehydration via an enolate intermediate. This chain is 3-dehydroquinate dehydratase (aroQ), found in Helicobacter pylori (strain J99 / ATCC 700824) (Campylobacter pylori J99).